We begin with the raw amino-acid sequence, 393 residues long: 2-methylcitrate synthase (393 aa).

Residues R92 and H207 each coordinate substrate. H242 is an active-site residue. 275-279 contacts CoA; that stretch reads KIMGF. Residue H281 is part of the active site. Substrate is bound at residue R290. D332 is a catalytic residue. Residues R357 and R376 each contribute to the substrate site.

Belongs to the citrate synthase family. Homodimer.

It catalyses the reaction propanoyl-CoA + oxaloacetate + H2O = (2S,3S)-2-methylcitrate + CoA + H(+). The enzyme catalyses oxaloacetate + acetyl-CoA + H2O = citrate + CoA + H(+). It functions in the pathway organic acid metabolism; propanoate degradation. It participates in carbohydrate metabolism; tricarboxylic acid cycle; isocitrate from oxaloacetate: step 1/2. Its function is as follows. Involved in the catabolism of short chain fatty acids (SCFA) via the tricarboxylic acid (TCA)(acetyl degradation route) and via the 2-methylcitrate cycle I (propionate degradation route). Catalyzes the Claisen condensation of propionyl-CoA and oxaloacetate (OAA) to yield 2-methylcitrate (2-MC) and CoA. Also catalyzes the condensation of oxaloacetate with acetyl-CoA. The polypeptide is 2-methylcitrate synthase (gltA1) (Mycobacterium tuberculosis (strain ATCC 35801 / TMC 107 / Erdman)).